A 673-amino-acid polypeptide reads, in one-letter code: UvrABC system protein C (673 aa).

Positions 16–95 (VEPGVYKFRD…IKEFDPRFNV (80 aa)) constitute a GIY-YIG domain. The UVR domain occupies 208 to 243 (DKMVRELERRMHAAAEDLDFETAARLRDDVQALRRA). A disordered region spans residues 488-526 (RDEAERDELDGTAAGAPLVDDDETPTSRPGIDPTTGRPR).

It belongs to the UvrC family. In terms of assembly, interacts with UvrB in an incision complex.

It is found in the cytoplasm. Its function is as follows. The UvrABC repair system catalyzes the recognition and processing of DNA lesions. UvrC both incises the 5' and 3' sides of the lesion. The N-terminal half is responsible for the 3' incision and the C-terminal half is responsible for the 5' incision. The polypeptide is UvrABC system protein C (Nocardia farcinica (strain IFM 10152)).